Reading from the N-terminus, the 84-residue chain is ATP synthase subunit c (84 aa).

Transmembrane regions (helical) follow at residues I9–I29 and I54–I74.

It belongs to the ATPase C chain family. In terms of assembly, F-type ATPases have 2 components, F(1) - the catalytic core - and F(0) - the membrane proton channel. F(1) has five subunits: alpha(3), beta(3), gamma(1), delta(1), epsilon(1). F(0) has three main subunits: a(1), b(2) and c(10-14). The alpha and beta chains form an alternating ring which encloses part of the gamma chain. F(1) is attached to F(0) by a central stalk formed by the gamma and epsilon chains, while a peripheral stalk is formed by the delta and b chains.

It localises to the cell inner membrane. In terms of biological role, f(1)F(0) ATP synthase produces ATP from ADP in the presence of a proton or sodium gradient. F-type ATPases consist of two structural domains, F(1) containing the extramembraneous catalytic core and F(0) containing the membrane proton channel, linked together by a central stalk and a peripheral stalk. During catalysis, ATP synthesis in the catalytic domain of F(1) is coupled via a rotary mechanism of the central stalk subunits to proton translocation. Key component of the F(0) channel; it plays a direct role in translocation across the membrane. A homomeric c-ring of between 10-14 subunits forms the central stalk rotor element with the F(1) delta and epsilon subunits. This Haemophilus influenzae (strain PittEE) protein is ATP synthase subunit c.